The primary structure comprises 181 residues: Adenine phosphoribosyltransferase (181 aa).

The protein belongs to the purine/pyrimidine phosphoribosyltransferase family. As to quaternary structure, homodimer.

Its subcellular location is the cytoplasm. It carries out the reaction AMP + diphosphate = 5-phospho-alpha-D-ribose 1-diphosphate + adenine. The protein operates within purine metabolism; AMP biosynthesis via salvage pathway; AMP from adenine: step 1/1. In terms of biological role, catalyzes a salvage reaction resulting in the formation of AMP, that is energically less costly than de novo synthesis. The protein is Adenine phosphoribosyltransferase of Methylobacterium radiotolerans (strain ATCC 27329 / DSM 1819 / JCM 2831 / NBRC 15690 / NCIMB 10815 / 0-1).